Reading from the N-terminus, the 693-residue chain is Oxysterol-binding protein-related protein 2B (693 aa).

Residues 1-15 (MPLTRSKSLPATENG) are compositionally biased toward polar residues. Residues 1–22 (MPLTRSKSLPATENGGSDRETL) are disordered. The PH domain maps to 25–154 (GRSVAGILYK…WLQALASTRG (130 aa)). Residues 207-239 (EVQEQIKLLHEERKKLLDALRQLEMANLEAEAS) adopt a coiled-coil conformation. Disordered regions lie at residues 256 to 298 (LGRG…GEPD) and 600 to 639 (EKLPPTDSRLRPDQRHLENGEYEKANEEKQRLERRQRMSR). Residues 274 to 284 (QEFEDISEEDE) show a composition bias toward acidic residues. Basic and acidic residues-rich tracts occupy residues 285-294 (ASFHDTKESF) and 600-635 (EKLPPTDSRLRPDQRHLENGEYEKANEEKQRLERRQ). Residues 612-643 (DQRHLENGEYEKANEEKQRLERRQRMSRQIQE) adopt a coiled-coil conformation.

The protein belongs to the OSBP family. As to expression, expressed in roots, leaves, stems and flowers.

May be involved in the transport of sterols. The protein is Oxysterol-binding protein-related protein 2B (ORP2B) of Arabidopsis thaliana (Mouse-ear cress).